A 486-amino-acid polypeptide reads, in one-letter code: Katanin p60 ATPase-containing subunit A1 (486 aa).

The interval 103–174 is disordered; it reads RSSPLPVRRP…NKAEVSEKEV (72 aa). A compositionally biased stretch (basic and acidic residues) spans 143-174; it reads NGDRAKPLKGKEKKEAKPKDDKNKAEVSEKEV. 244–251 is an ATP binding site; sequence GPPGTGKT.

This sequence belongs to the AAA ATPase family. Katanin p60 subunit A1 subfamily. Can homooligomerize into hexameric rings, which may be promoted by interaction with microtubules. Interacts with katnb1, which may serve as a targeting subunit.

The protein resides in the cytoplasm. It localises to the cytoskeleton. The protein localises to the microtubule organizing center. Its subcellular location is the centrosome. It is found in the spindle pole. The protein resides in the spindle. It catalyses the reaction n ATP + n H2O + a microtubule = n ADP + n phosphate + (n+1) alpha/beta tubulin heterodimers.. Its activity is regulated as follows. ATPase activity is stimulated by microtubules, which promote homooligomerization. ATP-dependent microtubule severing is stimulated by interaction with katnb1. Catalytic subunit of a complex which severs microtubules in an ATP-dependent manner. Microtubule severing may promote rapid reorganization of cellular microtubule arrays and the release of microtubules from the centrosome following nucleation. The polypeptide is Katanin p60 ATPase-containing subunit A1 (katna1) (Salmo salar (Atlantic salmon)).